The following is a 177-amino-acid chain: Large ribosomal subunit protein uL6 (177 aa).

It belongs to the universal ribosomal protein uL6 family. Part of the 50S ribosomal subunit.

In terms of biological role, this protein binds to the 23S rRNA, and is important in its secondary structure. It is located near the subunit interface in the base of the L7/L12 stalk, and near the tRNA binding site of the peptidyltransferase center. The chain is Large ribosomal subunit protein uL6 from Vibrio campbellii (strain ATCC BAA-1116).